A 285-amino-acid chain; its full sequence is 4-diphosphocytidyl-2-C-methyl-D-erythritol kinase (285 aa).

The active site involves Lys12. 95–105 (PMGGGVGGGSS) is a binding site for ATP. Asp137 is an active-site residue.

Belongs to the GHMP kinase family. IspE subfamily.

The enzyme catalyses 4-CDP-2-C-methyl-D-erythritol + ATP = 4-CDP-2-C-methyl-D-erythritol 2-phosphate + ADP + H(+). Its pathway is isoprenoid biosynthesis; isopentenyl diphosphate biosynthesis via DXP pathway; isopentenyl diphosphate from 1-deoxy-D-xylulose 5-phosphate: step 3/6. Catalyzes the phosphorylation of the position 2 hydroxy group of 4-diphosphocytidyl-2C-methyl-D-erythritol. In Actinobacillus pleuropneumoniae serotype 3 (strain JL03), this protein is 4-diphosphocytidyl-2-C-methyl-D-erythritol kinase.